The following is a 177-amino-acid chain: ATP synthase subunit delta (177 aa).

This sequence belongs to the ATPase delta chain family. As to quaternary structure, F-type ATPases have 2 components, F(1) - the catalytic core - and F(0) - the membrane proton channel. F(1) has five subunits: alpha(3), beta(3), gamma(1), delta(1), epsilon(1). F(0) has three main subunits: a(1), b(2) and c(10-14). The alpha and beta chains form an alternating ring which encloses part of the gamma chain. F(1) is attached to F(0) by a central stalk formed by the gamma and epsilon chains, while a peripheral stalk is formed by the delta and b chains.

The protein localises to the cell inner membrane. F(1)F(0) ATP synthase produces ATP from ADP in the presence of a proton or sodium gradient. F-type ATPases consist of two structural domains, F(1) containing the extramembraneous catalytic core and F(0) containing the membrane proton channel, linked together by a central stalk and a peripheral stalk. During catalysis, ATP synthesis in the catalytic domain of F(1) is coupled via a rotary mechanism of the central stalk subunits to proton translocation. In terms of biological role, this protein is part of the stalk that links CF(0) to CF(1). It either transmits conformational changes from CF(0) to CF(1) or is implicated in proton conduction. This chain is ATP synthase subunit delta, found in Shigella flexneri.